Reading from the N-terminus, the 371-residue chain is Transcription factor MYB12 (371 aa).

HTH myb-type domains follow at residues 9–61 (KVGI…INYL) and 62–116 (RSDL…SRKL). 2 consecutive DNA-binding regions (H-T-H motif) follow at residues 37–61 (WRSLPKNAGLKRCGKSCRLRWINYL) and 89–112 (WSLIAGHLPGRTDNEIKNYWNSHL). Residues 136 to 183 (NASSAPPPPQAKRRLGRTSRSAMKPKIHRTKTRKTKKTSAPPEPNADV) are disordered. Residues 146–172 (AKRRLGRTSRSAMKPKIHRTKTRKTKK) are compositionally biased toward basic residues.

In terms of tissue distribution, expressed in stems and flower buds. Expressed in seedlings, roots, cotyledons and apical meristems.

It localises to the nucleus. Flavonol-specific transcription activator involved in the regulation of several genes of flavonoid biosynthesis. Activates the expression of CHS, CHI, F3H and FLS1. Controls flavonol biosynthesis mainly in the root. Confers tolerance to UV-B. This chain is Transcription factor MYB12, found in Arabidopsis thaliana (Mouse-ear cress).